A 79-amino-acid chain; its full sequence is UPF0349 protein GTNG_2908 (79 aa).

The protein belongs to the UPF0349 family.

This is UPF0349 protein GTNG_2908 from Geobacillus thermodenitrificans (strain NG80-2).